Reading from the N-terminus, the 338-residue chain is Large ribosomal subunit protein uL10 (338 aa).

Residues 297–338 (PSAQQTQTQQSTAEEKKEEKKEEEKKGPSEEEIGSGLASLFG) form a disordered region. Low complexity predominate over residues 298–308 (SAQQTQTQQST). Over residues 309 to 325 (AEEKKEEKKEEEKKGPS) the composition is skewed to basic and acidic residues.

It belongs to the universal ribosomal protein uL10 family. Part of the 50S ribosomal subunit. Forms part of the ribosomal stalk which helps the ribosome interact with GTP-bound translation factors. Forms a heptameric L10(L12)2(L12)2(L12)2 complex, where L10 forms an elongated spine to which the L12 dimers bind in a sequential fashion.

Functionally, forms part of the ribosomal stalk, playing a central role in the interaction of the ribosome with GTP-bound translation factors. The chain is Large ribosomal subunit protein uL10 from Saccharolobus islandicus (strain Y.N.15.51 / Yellowstone #2) (Sulfolobus islandicus).